We begin with the raw amino-acid sequence, 131 residues long: Profilin-2 (131 aa).

Cysteine 13 and cysteine 115 form a disulfide bridge. The Involved in PIP2 interaction signature appears at 81–97 (AVIRGKKGPGGVTVKKT). Position 111 is a phosphothreonine (threonine 111).

It belongs to the profilin family. As to quaternary structure, multimer. Occurs in many kinds of cells as a complex with monomeric actin in a 1:1 ratio. Phosphorylated by MAP kinases.

It is found in the cytoplasm. The protein resides in the cytoskeleton. Its function is as follows. Binds to actin and affects the structure of the cytoskeleton. At high concentrations, profilin prevents the polymerization of actin, whereas it enhances it at low concentrations. By binding to PIP2, it inhibits the formation of IP3 and DG. This Hevea brasiliensis (Para rubber tree) protein is Profilin-2.